A 495-amino-acid chain; its full sequence is Probable plastidic glucose transporter 3 (495 aa).

12 consecutive transmembrane segments (helical) span residues 55–75 (LPHV…LGVV), 97–117 (LVVS…GLVA), 131–151 (LPMI…GMLL), 154–174 (FLVG…VTEV), 183–203 (YGSS…FAGI), 214–234 (ICFW…ELCV), 294–314 (VVFI…NAVF), 330–350 (SANI…VVLM), 357–377 (VLLI…AIAY), 384–404 (FGTL…FATG), 425–445 (ALAV…LLFL), and 451–471 (LGSV…VIFV).

It belongs to the major facilitator superfamily. Sugar transporter (TC 2.A.1.1) family.

It localises to the plastid. The protein localises to the chloroplast membrane. Its function is as follows. May be involved in the efflux of glucose towards the cytosol. The protein is Probable plastidic glucose transporter 3 of Arabidopsis thaliana (Mouse-ear cress).